A 399-amino-acid polypeptide reads, in one-letter code: Methylmalonic aciduria type A homolog, mitochondrial (399 aa).

The transit peptide at 1–15 directs the protein to the mitochondrion; the sequence is MVVRSLLRVSRLTSA. Residues 131 to 139, Asp-274, and 310 to 312 each bind GTP; these read GSPGVGKSS and SIM.

It belongs to the SIMIBI class G3E GTPase family. ArgK/MeaB subfamily.

The protein resides in the mitochondrion. May have GTPase activity. May also bind and hydrolyze ATP. May function as chaperone. Likely to have a role in propionyl-CoA and adenosylcobalamin metabolism. The chain is Methylmalonic aciduria type A homolog, mitochondrial (mmaa-1) from Caenorhabditis elegans.